Consider the following 318-residue polypeptide: Replication factor C small subunit (318 aa).

43–50 (GSVGTGKT) serves as a coordination point for ATP.

This sequence belongs to the activator 1 small subunits family. RfcS subfamily. As to quaternary structure, heteromultimer composed of small subunits (RfcS) and large subunits (RfcL).

In terms of biological role, part of the RFC clamp loader complex which loads the PCNA sliding clamp onto DNA. The chain is Replication factor C small subunit from Thermoplasma volcanium (strain ATCC 51530 / DSM 4299 / JCM 9571 / NBRC 15438 / GSS1).